We begin with the raw amino-acid sequence, 157 residues long: Vitamin K-dependent protein C (157 aa).

Residues 1–157 (ENGEVDLDIQ…GCGRLHNYGV (157 aa)) form the Peptidase S1 domain. Asparagine 17 carries N-linked (GlcNAc...) asparagine glycosylation. The active-site Charge relay system is the aspartate 26. The N-linked (GlcNAc...) asparagine glycan is linked to asparagine 78. Cystine bridges form between cysteine 96–cysteine 110 and cysteine 121–cysteine 149. The active-site Charge relay system is serine 125.

This sequence belongs to the peptidase S1 family. Plasma; synthesized in the liver.

Its subcellular location is the secreted. The protein localises to the golgi apparatus. It localises to the endoplasmic reticulum. The enzyme catalyses Degradation of blood coagulation factors Va and VIIIa.. Functionally, protein C is a vitamin K-dependent serine protease that regulates blood coagulation by inactivating factors Va and VIIIa in the presence of calcium ions and phospholipids. Exerts a protective effect on the endothelial cell barrier function. In Equus caballus (Horse), this protein is Vitamin K-dependent protein C (PROC).